The sequence spans 439 residues: tRNA-2-methylthio-N(6)-dimethylallyladenosine synthase (439 aa).

The region spanning 5 to 121 is the MTTase N-terminal domain; sequence KKLFIKTYGC…LPELEAKTRA (117 aa). C14, C50, C84, C159, C163, and C166 together coordinate [4Fe-4S] cluster. Positions 145–378 constitute a Radical SAM core domain; the sequence is AKRGPTAFLT…ITRHQREIQD (234 aa). A TRAM domain is found at 378–439; the sequence is DGMVGREVSV…GANSLAGELA (62 aa).

It belongs to the methylthiotransferase family. MiaB subfamily. As to quaternary structure, monomer. Requires [4Fe-4S] cluster as cofactor.

The protein localises to the cytoplasm. It carries out the reaction N(6)-dimethylallyladenosine(37) in tRNA + (sulfur carrier)-SH + AH2 + 2 S-adenosyl-L-methionine = 2-methylsulfanyl-N(6)-dimethylallyladenosine(37) in tRNA + (sulfur carrier)-H + 5'-deoxyadenosine + L-methionine + A + S-adenosyl-L-homocysteine + 2 H(+). In terms of biological role, catalyzes the methylthiolation of N6-(dimethylallyl)adenosine (i(6)A), leading to the formation of 2-methylthio-N6-(dimethylallyl)adenosine (ms(2)i(6)A) at position 37 in tRNAs that read codons beginning with uridine. This is tRNA-2-methylthio-N(6)-dimethylallyladenosine synthase from Ruegeria pomeroyi (strain ATCC 700808 / DSM 15171 / DSS-3) (Silicibacter pomeroyi).